A 101-amino-acid chain; its full sequence is Small ribosomal subunit protein uS14 (101 aa).

This sequence belongs to the universal ribosomal protein uS14 family. Part of the 30S ribosomal subunit. Contacts proteins S3 and S10.

Functionally, binds 16S rRNA, required for the assembly of 30S particles and may also be responsible for determining the conformation of the 16S rRNA at the A site. In Pseudomonas putida (strain W619), this protein is Small ribosomal subunit protein uS14.